We begin with the raw amino-acid sequence, 196 residues long: ATP-dependent Clp protease proteolytic subunit (196 aa).

Residue Ser101 is the Nucleophile of the active site. His126 is a catalytic residue.

This sequence belongs to the peptidase S14 family. Component of the chloroplastic Clp protease core complex.

The protein resides in the plastid. The protein localises to the chloroplast stroma. It carries out the reaction Hydrolysis of proteins to small peptides in the presence of ATP and magnesium. alpha-casein is the usual test substrate. In the absence of ATP, only oligopeptides shorter than five residues are hydrolyzed (such as succinyl-Leu-Tyr-|-NHMec, and Leu-Tyr-Leu-|-Tyr-Trp, in which cleavage of the -Tyr-|-Leu- and -Tyr-|-Trp bonds also occurs).. In terms of biological role, cleaves peptides in various proteins in a process that requires ATP hydrolysis. Has a chymotrypsin-like activity. Plays a major role in the degradation of misfolded proteins. The polypeptide is ATP-dependent Clp protease proteolytic subunit (Aethionema cordifolium (Lebanon stonecress)).